We begin with the raw amino-acid sequence, 635 residues long: Threonine--tRNA ligase (635 aa).

One can recognise a TGS domain in the interval methionine 1–threonine 61. The catalytic stretch occupies residues aspartate 242 to proline 532. Zn(2+)-binding residues include cysteine 333, histidine 384, and histidine 509.

It belongs to the class-II aminoacyl-tRNA synthetase family. In terms of assembly, homodimer. Requires Zn(2+) as cofactor.

It is found in the cytoplasm. The enzyme catalyses tRNA(Thr) + L-threonine + ATP = L-threonyl-tRNA(Thr) + AMP + diphosphate + H(+). Catalyzes the attachment of threonine to tRNA(Thr) in a two-step reaction: L-threonine is first activated by ATP to form Thr-AMP and then transferred to the acceptor end of tRNA(Thr). Also edits incorrectly charged L-seryl-tRNA(Thr). The chain is Threonine--tRNA ligase from Clostridium botulinum (strain Okra / Type B1).